The chain runs to 730 residues: Heterogeneous nuclear ribonucleoprotein M (730 aa).

Low complexity predominate over residues 1–13 (MAAGVEAAAEVAA). Residues 1-62 (MAAGVEAAAE…NIKRGGNRFE (62 aa)) are disordered. A2 is subject to N-acetylalanine. K17 participates in a covalent cross-link: Glycyl lysine isopeptide (Lys-Gly) (interchain with G-Cter in SUMO2). S29 carries the phosphoserine modification. K37 is covalently cross-linked (Glycyl lysine isopeptide (Lys-Gly) (interchain with G-Cter in SUMO2)). A compositionally biased stretch (basic and acidic residues) spans 38–50 (GEGERPAQNEKRK). Glycyl lysine isopeptide (Lys-Gly) (interchain with G-Cter in SUMO2) cross-links involve residues K69 and K83. 2 consecutive RRM domains span residues 71-149 (YRAF…EDPD) and 204-281 (STVF…MDER). Position 86 is a phosphoserine (S86). Glycyl lysine isopeptide (Lys-Gly) (interchain with G-Cter in SUMO2) cross-links involve residues K88 and K127. K134 is modified (N6-acetyllysine; alternate). Residue K134 forms a Glycyl lysine isopeptide (Lys-Gly) (interchain with G-Cter in SUMO2); alternate linkage. Residues K143 and K145 each participate in a glycyl lysine isopeptide (Lys-Gly) (interchain with G-Cter in SUMO2) cross-link. A Phosphoserine modification is found at S204. K221 participates in a covalent cross-link: Glycyl lysine isopeptide (Lys-Gly) (interchain with G-Cter in SUMO2). At K277 the chain carries N6-acetyllysine; alternate. A Glycyl lysine isopeptide (Lys-Gly) (interchain with G-Cter in SUMO2); alternate cross-link involves residue K277. Residues K285 and K345 each participate in a glycyl lysine isopeptide (Lys-Gly) (interchain with G-Cter in SUMO2) cross-link. A phosphoserine mark is found at S365 and S377. Residues K381 and K388 each participate in a glycyl lysine isopeptide (Lys-Gly) (interchain with G-Cter in SUMO2) cross-link. S397 is modified (phosphoserine). Tandem repeats lie at residues 400-405 (GIERMG), 407-412 (GIDRLG), 415-420 (GMERMG), and 426-431 (GMDRVG). A 27 X 6 AA repeats of [GEVSTPAN]-[ILMV]-[DE]-[RH]-[MLVI]-[GAV] region spans residues 400–608 (GIERMGPGID…ALGAGIERMG (209 aa)). Position 432 is a phosphoserine (S432). Tandem repeats lie at residues 433 to 438 (EIERMG), 440 to 445 (VMDRMG), and 446 to 451 (SVERMG). Residue S452 is modified to Phosphoserine. 4 repeat units span residues 453–458 (GIERMG), 461–466 (GLDHMA), 468–473 (SIERMG), and 475–480 (TMERIG). The residue at position 468 (S468) is a Phosphoserine. S481 is modified (phosphoserine). 16 consecutive repeat copies span residues 482–487 (GVERMG), 493–498 (GLERMA), 500–505 (PIDRVG), 507–512 (TIERMG), 514–519 (GVERMG), 521–526 (AIERMG), 528–533 (SMERMV), 540–545 (GLERMG), 547–552 (VMDRMA), 554–559 (GLERMG), 562–566 (NLERM), 567–572 (GLERMG), 575–579 (SLERM), 580–585 (GLERMG), 588–593 (SLERMG), and 603–608 (GIERMG). Omega-N-methylarginine is present on R496. S528 carries the post-translational modification Phosphoserine. At S575 the chain carries Phosphoserine. The residue at position 588 (S588) is a Phosphoserine. Residues S618, S633, and S637 each carry the phosphoserine modification. A Glycyl lysine isopeptide (Lys-Gly) (interchain with G-Cter in SUMO2) cross-link involves residue K651. Residues 653-729 (CQIFVRNLPF…REIDVRIDRN (77 aa)) enclose the RRM 3 domain. Residue T665 is modified to Phosphothreonine. K667 participates in a covalent cross-link: Glycyl lysine isopeptide (Lys-Gly) (interchain with G-Cter in SUMO2). K672 is subject to N6-acetyllysine. Glycyl lysine isopeptide (Lys-Gly) (interchain with G-Cter in SUMO2) cross-links involve residues K685 and K692. Position 698 is an N6-acetyllysine; alternate (K698). A Glycyl lysine isopeptide (Lys-Gly) (interchain with G-Cter in SUMO2); alternate cross-link involves residue K698. Residue K698 forms a Glycyl lysine isopeptide (Lys-Gly) (interchain with G-Cter in SUMO1); alternate linkage. The residue at position 701 (S701) is a Phosphoserine. K716 participates in a covalent cross-link: Glycyl lysine isopeptide (Lys-Gly) (interchain with G-Cter in SUMO2).

As to quaternary structure, identified in the spliceosome C complex. Interacts with PPIA/CYPA. In terms of processing, sumoylated.

It is found in the nucleus. Its subcellular location is the nucleolus. Pre-mRNA binding protein in vivo, binds avidly to poly(G) and poly(U) RNA homopolymers in vitro. Involved in splicing. Acts as a receptor for carcinoembryonic antigen in Kupffer cells, may initiate a series of signaling events leading to tyrosine phosphorylation of proteins and induction of IL-1 alpha, IL-6, IL-10 and tumor necrosis factor alpha cytokines. This chain is Heterogeneous nuclear ribonucleoprotein M (HNRNPM), found in Homo sapiens (Human).